The chain runs to 52 residues: MKDIGHLQHLAQRLQWNRRAVNICGMHGWTKDLSPHSRMPSMLEHVKHYMSC.

This is an uncharacterized protein from Homo sapiens (Human).